Reading from the N-terminus, the 727-residue chain is Protein edg-1 (727 aa).

Positions 703 to 727 are disordered; it reads FAESSVKPTTSSAYGNSSNFSRYAD.

In terms of assembly, may interact with deps-1 and prg-1.

The protein resides in the cytoplasmic granule. Plays a role in regulating deps-1 cluster formation in the germline. The protein is Protein edg-1 of Caenorhabditis elegans.